The chain runs to 360 residues: Uroporphyrinogen decarboxylase (360 aa).

Substrate is bound by residues Arg31–Arg35, Asp81, Tyr157, Thr212, and His333.

It belongs to the uroporphyrinogen decarboxylase family. Homodimer.

The protein resides in the cytoplasm. It catalyses the reaction uroporphyrinogen III + 4 H(+) = coproporphyrinogen III + 4 CO2. It participates in porphyrin-containing compound metabolism; protoporphyrin-IX biosynthesis; coproporphyrinogen-III from 5-aminolevulinate: step 4/4. Its function is as follows. Catalyzes the decarboxylation of four acetate groups of uroporphyrinogen-III to yield coproporphyrinogen-III. In Herminiimonas arsenicoxydans, this protein is Uroporphyrinogen decarboxylase.